The following is a 697-amino-acid chain: MTRSVYVTGIDRGDGRQVVELGVMELLTRQVDRVGVFRPLVHDGPDRLFELLRARYRLSQDPATVYGMDYQEASLLQAEQGVDELVSALVDRFHLVARDYDVVLVLGTDYADTQFPDELSLNARLANEFGASVLPVVGGRKQTADSVLAETHNAFRAYDGLGCDVLAMVTNRVAREDRDEIAERLAHRLPVPCWVVPDEPALSAPTVSQIAHALGAEIVLGDDSGLARDALDFVFGGAMLPNLLAALTPGCLVITPGDRADLVIGTLAAHSAGTPPIAGVLLTLNEVPGEGILTLAARLAPGTPVLSVTGTSFPTAERLFSLEGKLGAATPRKAETALGLFERYVDTAELNKRVSAPSSDRVTPMMFEHKLLEQARSDLRRVVLPEGTEERVLHAAEVLLRRGVCELTLLGPVEQIRKKAADLGIDLGGAELIDPAASELRDSFAEKYAALRAHKGVTVELAYDVVSDVNYFGTLMVQEGFADGMVSGSVHSTAATIRPAFEIIKTKPDAAIVSSVFFMCLADKVLVYGDCAVNPDPDAEQLADIATQSASTAAQFGVEPRIAMLSYSTGTSGSGADVDKVREATELVRSRRPDLSVEGPIQYDAAVEPSVAATKLPGSAVAGQASVLIFPDLNTGNNTYKAVQRSAGAIAVGPVLQGLRKPVNDLSRGALVQDIVNTVAITAIQAQQSPTEKASAQ.

The tract at residues 366 to 697 (MFEHKLLEQA…QSPTEKASAQ (332 aa)) is phosphate acetyltransferase.

This sequence in the N-terminal section; belongs to the CobB/CobQ family. The protein in the C-terminal section; belongs to the phosphate acetyltransferase and butyryltransferase family. In terms of assembly, homohexamer.

It is found in the cytoplasm. The enzyme catalyses acetyl-CoA + phosphate = acetyl phosphate + CoA. It participates in metabolic intermediate biosynthesis; acetyl-CoA biosynthesis; acetyl-CoA from acetate: step 2/2. In terms of biological role, involved in acetate metabolism. The chain is Phosphate acetyltransferase (pta) from Streptomyces coelicolor (strain ATCC BAA-471 / A3(2) / M145).